The primary structure comprises 876 residues: Alanine--tRNA ligase (876 aa).

Residues His562, His566, Cys666, and His670 each coordinate Zn(2+).

Belongs to the class-II aminoacyl-tRNA synthetase family. It depends on Zn(2+) as a cofactor.

It localises to the cytoplasm. The catalysed reaction is tRNA(Ala) + L-alanine + ATP = L-alanyl-tRNA(Ala) + AMP + diphosphate. In terms of biological role, catalyzes the attachment of alanine to tRNA(Ala) in a two-step reaction: alanine is first activated by ATP to form Ala-AMP and then transferred to the acceptor end of tRNA(Ala). Also edits incorrectly charged Ser-tRNA(Ala) and Gly-tRNA(Ala) via its editing domain. This Hahella chejuensis (strain KCTC 2396) protein is Alanine--tRNA ligase.